A 243-amino-acid polypeptide reads, in one-letter code: tRNA (guanine-N(7)-)-methyltransferase (243 aa).

4 residues coordinate S-adenosyl-L-methionine: glutamate 74, glutamate 99, aspartate 126, and aspartate 149. Aspartate 149 is a catalytic residue. Substrate contacts are provided by residues lysine 153, aspartate 185, and 221-224; that span reads TKFE.

This sequence belongs to the class I-like SAM-binding methyltransferase superfamily. TrmB family.

It carries out the reaction guanosine(46) in tRNA + S-adenosyl-L-methionine = N(7)-methylguanosine(46) in tRNA + S-adenosyl-L-homocysteine. It functions in the pathway tRNA modification; N(7)-methylguanine-tRNA biosynthesis. In terms of biological role, catalyzes the formation of N(7)-methylguanine at position 46 (m7G46) in tRNA. This is tRNA (guanine-N(7)-)-methyltransferase from Psychromonas ingrahamii (strain DSM 17664 / CCUG 51855 / 37).